The primary structure comprises 122 residues: UPF0102 protein CPE1705 (122 aa).

Belongs to the UPF0102 family.

The polypeptide is UPF0102 protein CPE1705 (Clostridium perfringens (strain 13 / Type A)).